Here is a 529-residue protein sequence, read N- to C-terminus: UDP-glucuronosyltransferase 2B18 (529 aa).

The first 21 residues, 1 to 21 (MSVKWTSVILLIQLSFYFSSG), serve as a signal peptide directing secretion. Residues N67 and N68 are each glycosylated (N-linked (GlcNAc...) asparagine). Residues 493-513 (VIGFLLACVATVIFIIMKCCL) form a helical membrane-spanning segment.

The protein belongs to the UDP-glycosyltransferase family. As to expression, expressed in liver, prostate, kidney, testis, adrenal, bile duct, bladder, colon, small intestine, cerebellum and pancreas.

The protein localises to the microsome membrane. It is found in the endoplasmic reticulum membrane. The enzyme catalyses glucuronate acceptor + UDP-alpha-D-glucuronate = acceptor beta-D-glucuronoside + UDP + H(+). Functionally, UDPGT is of major importance in the conjugation and subsequent elimination of potentially toxic xenobiotics and endogenous compounds. This isozyme displays activity toward 3-hydroxyandrogens. It is principally active on C19 steroids having a hydroxyl group at position 3-alpha of the steroid molecule and also active on planar phenols and bile acids. This chain is UDP-glucuronosyltransferase 2B18 (UGT2B18), found in Macaca fascicularis (Crab-eating macaque).